A 400-amino-acid chain; its full sequence is NADH dehydrogenase-like protein Rv1812c (400 aa).

It belongs to the NADH dehydrogenase family. It depends on FAD as a cofactor.

This is NADH dehydrogenase-like protein Rv1812c from Mycobacterium tuberculosis (strain ATCC 25618 / H37Rv).